A 198-amino-acid polypeptide reads, in one-letter code: Glycerol-3-phosphate acyltransferase (198 aa).

The next 5 membrane-spanning stretches (helical) occupy residues 2–22, 48–70, 75–97, 111–131, and 154–174; these read YAVLTAIIAYLIGCINNAYIF, LGYKAAAPVFALDVLKGVIAVLI, MGNTGAMIAGIAVVCGHNWPVFL, VVMTVSPLLGLIALAIGVTVI, and IFWNSTQIFIFSLILASLAIF.

This sequence belongs to the PlsY family. Probably interacts with PlsX.

The protein resides in the cell membrane. It catalyses the reaction an acyl phosphate + sn-glycerol 3-phosphate = a 1-acyl-sn-glycero-3-phosphate + phosphate. The protein operates within lipid metabolism; phospholipid metabolism. In terms of biological role, catalyzes the transfer of an acyl group from acyl-phosphate (acyl-PO(4)) to glycerol-3-phosphate (G3P) to form lysophosphatidic acid (LPA). This enzyme utilizes acyl-phosphate as fatty acyl donor, but not acyl-CoA or acyl-ACP. The sequence is that of Glycerol-3-phosphate acyltransferase from Thermoanaerobacter sp. (strain X514).